The following is a 116-amino-acid chain: L-amino-acid oxidase BjussuLAAO-II (116 aa).

42 to 45 (GPMR) contributes to the FAD binding site. Positions 45 and 78 each coordinate substrate.

Belongs to the flavin monoamine oxidase family. FIG1 subfamily. As to quaternary structure, homodimer; non-covalently linked. FAD serves as cofactor. Glycosylated. As to expression, expressed by the venom gland.

Its subcellular location is the secreted. It carries out the reaction an L-alpha-amino acid + O2 + H2O = a 2-oxocarboxylate + H2O2 + NH4(+). It catalyses the reaction L-leucine + O2 + H2O = 4-methyl-2-oxopentanoate + H2O2 + NH4(+). The catalysed reaction is L-phenylalanine + O2 + H2O = 3-phenylpyruvate + H2O2 + NH4(+). The enzyme catalyses L-methionine + O2 + H2O = 4-methylsulfanyl-2-oxobutanoate + H2O2 + NH4(+). It carries out the reaction L-isoleucine + O2 + H2O = (S)-3-methyl-2-oxopentanoate + H2O2 + NH4(+). It catalyses the reaction L-histidine + O2 + H2O = 3-(imidazol-5-yl)pyruvate + H2O2 + NH4(+). The catalysed reaction is L-tyrosine + O2 + H2O = 3-(4-hydroxyphenyl)pyruvate + H2O2 + NH4(+). The enzyme catalyses L-tryptophan + O2 + H2O = indole-3-pyruvate + H2O2 + NH4(+). Its activity is regulated as follows. Its enzymatic activities is reduced by the presence of Zn(2+), Al(3+), Cu(2+), Na(+) or Ni(2+) salts. In terms of biological role, catalyzes an oxidative deamination of predominantly hydrophobic and aromatic L-amino acids, thus producing hydrogen peroxide that may contribute to the diverse toxic effects of this enzyme. Shows very high enzymatic activity on L-Met and L-Leu, high activity on L-Ile, L-Phe and L-Tyr and moderate activity on L-His. Exhibits diverse biological activities, such as hemorrhage, hemolysis, edema, apoptosis of vascular endothelial cells or tumor cell lines, and antibacterial, as well as regulation of platelet aggregation. Effects of snake L-amino oxidases on platelets are controversial, since they either induce aggregation or inhibit agonist-induced aggregation. These different effects are probably due to different experimental conditions. In vitro, has a strong antiprotozoal effect against Leishmania amazonensis (IC(50)=4.56 ug/mL) and Trypanosoma cruzi (IC(50)=4.85 ug/mL). It also causes cell death and DNA damage in hepatocarcinoma cells (HepG2) in vitro by inducing oxidative stress. It exerts cytotoxicity towards colorectal adenocarcinomahuman cells (Caco-2) by acting on multiple intracellular targets. It diminishes cell viability by decreasing mitochondrial activity, the activity of acid phosphatases, and lysosomal function. In addition, it increases intracellular levels of reactive oxygen species and DNA damage, it elevates the expression of the pro-inflammatory cytokine genes TNF and IL6, and lowers the expression of the apoptotic-related genes. Also induces cytotoxicity (IC(50)=1.80 ug/mL) and apoptosis in MCF-7 cells (a human breast adeno-carcinoma cell line) by activating the intrinsic and extrinsic apoptosis pathways, but are not cytotoxic towards MCF-10A cells (a non-tumorigenic human breast epithelial cell line). The protein is L-amino-acid oxidase BjussuLAAO-II of Bothrops jararacussu (Jararacussu).